A 140-amino-acid chain; its full sequence is ATP synthase epsilon chain (140 aa).

Belongs to the ATPase epsilon chain family. F-type ATPases have 2 components, CF(1) - the catalytic core - and CF(0) - the membrane proton channel. CF(1) has five subunits: alpha(3), beta(3), gamma(1), delta(1), epsilon(1). CF(0) has three main subunits: a, b and c.

Its subcellular location is the cell inner membrane. Produces ATP from ADP in the presence of a proton gradient across the membrane. The chain is ATP synthase epsilon chain from Xylella fastidiosa (strain Temecula1 / ATCC 700964).